Consider the following 257-residue polypeptide: Enolase-phosphatase E1 (257 aa).

2 residues coordinate Mg(2+): D16 and E18. Substrate contacts are provided by residues 150 to 151 (SS) and K184. Position 209 (D209) interacts with Mg(2+).

It belongs to the HAD-like hydrolase superfamily. MasA/MtnC family. In terms of assembly, monomer. Requires Mg(2+) as cofactor.

It localises to the cytoplasm. The protein localises to the nucleus. The catalysed reaction is 5-methylsulfanyl-2,3-dioxopentyl phosphate + H2O = 1,2-dihydroxy-5-(methylsulfanyl)pent-1-en-3-one + phosphate. It functions in the pathway amino-acid biosynthesis; L-methionine biosynthesis via salvage pathway; L-methionine from S-methyl-5-thio-alpha-D-ribose 1-phosphate: step 3/6. The protein operates within amino-acid biosynthesis; L-methionine biosynthesis via salvage pathway; L-methionine from S-methyl-5-thio-alpha-D-ribose 1-phosphate: step 4/6. In terms of biological role, bifunctional enzyme that catalyzes the enolization of 2,3-diketo-5-methylthiopentyl-1-phosphate (DK-MTP-1-P) into the intermediate 2-hydroxy-3-keto-5-methylthiopentenyl-1-phosphate (HK-MTPenyl-1-P), which is then dephosphorylated to form the acireductone 1,2-dihydroxy-3-keto-5-methylthiopentene (DHK-MTPene). In Mus musculus (Mouse), this protein is Enolase-phosphatase E1 (Enoph1).